The primary structure comprises 443 residues: UDP-N-acetylmuramoylalanine--D-glutamate ligase (443 aa).

116–122 (GTNGKST) is a binding site for ATP.

This sequence belongs to the MurCDEF family.

The protein localises to the cytoplasm. The enzyme catalyses UDP-N-acetyl-alpha-D-muramoyl-L-alanine + D-glutamate + ATP = UDP-N-acetyl-alpha-D-muramoyl-L-alanyl-D-glutamate + ADP + phosphate + H(+). Its pathway is cell wall biogenesis; peptidoglycan biosynthesis. Cell wall formation. Catalyzes the addition of glutamate to the nucleotide precursor UDP-N-acetylmuramoyl-L-alanine (UMA). In Novosphingobium aromaticivorans (strain ATCC 700278 / DSM 12444 / CCUG 56034 / CIP 105152 / NBRC 16084 / F199), this protein is UDP-N-acetylmuramoylalanine--D-glutamate ligase.